We begin with the raw amino-acid sequence, 398 residues long: MAIKVLVVDDSSFFRRRVSEIVNQDPDLEVVAVAVNGKEAVEMAAKLKPQVITMDIEMPVMDGITAVREIMANNPTPILMFSSLTHDGAKATLDALEAGALDFLPKRFEDIATNKDDAILLLQQRIKALGRRRMYRSSSLTPTSTIESRRSTIAAPETNTPRRPLSSRLASTTTPVATRSSLSTTSADRHSANPTTSSISSIRASGKQYKLLLIGTSTGGPVALQKVLTAFPANYPHPIVLIQHMPAAFTPAFAARLNTLCKIEVKEAENGDVMRPGCAYLAPGGMQLMIERSGISGRLKVISGTQEMNYKPCVDITFASASKAFGGDVLAVVLTGMGADGREGARMLKSVGATIWAQDEASCVVYGMPQAVASTGISTHSISLDNMAEAILKESSRG.

Positions Lys4 to Leu121 constitute a Response regulatory domain. Asp55 is subject to 4-aspartylphosphate. Residues Arg133–Ser200 form a disordered region. Polar residues-rich tracts occupy residues Arg136–Ile146 and Arg168–Ser200. One can recognise a CheB-type methylesterase domain in the interval Ser205 to Gly398. Catalysis depends on residues Ser217, His244, and Asp340.

This sequence belongs to the CheB family. In terms of processing, phosphorylated by CheA. Phosphorylation of the N-terminal regulatory domain activates the methylesterase activity.

Its subcellular location is the cytoplasm. It catalyses the reaction [protein]-L-glutamate 5-O-methyl ester + H2O = L-glutamyl-[protein] + methanol + H(+). The enzyme catalyses L-glutaminyl-[protein] + H2O = L-glutamyl-[protein] + NH4(+). Involved in chemotaxis. Part of a chemotaxis signal transduction system that modulates chemotaxis in response to various stimuli. Catalyzes the demethylation of specific methylglutamate residues introduced into the chemoreceptors (methyl-accepting chemotaxis proteins or MCP) by CheR. Also mediates the irreversible deamidation of specific glutamine residues to glutamic acid. In Shewanella frigidimarina (strain NCIMB 400), this protein is Protein-glutamate methylesterase/protein-glutamine glutaminase.